The following is a 143-amino-acid chain: uncharacterized protein (143 aa).

Over residues 1 to 14 the composition is skewed to basic and acidic residues; sequence MPAAKKQIEEKPEV. The segment at 1-25 is disordered; the sequence is MPAAKKQIEEKPEVEQDLGAPDFSD.

This is an uncharacterized protein from Pseudoalteromonas phage PM2 (Bacteriophage PM2).